The primary structure comprises 758 residues: 5-methyltetrahydropteroyltriglutamate--homocysteine methyltransferase (758 aa).

5-methyltetrahydropteroyltri-L-glutamate-binding positions include 17 to 20 (RELK) and lysine 117. L-homocysteine is bound by residues 434 to 436 (IGS) and glutamate 487. Residues 434–436 (IGS) and glutamate 487 each bind L-methionine. 5-methyltetrahydropteroyltri-L-glutamate contacts are provided by residues 518–519 (RC) and tryptophan 564. L-homocysteine is bound at residue aspartate 602. Aspartate 602 provides a ligand contact to L-methionine. Glutamate 608 is a binding site for 5-methyltetrahydropteroyltri-L-glutamate. Zn(2+) is bound by residues histidine 644, cysteine 646, and glutamate 668. Catalysis depends on histidine 697, which acts as the Proton donor. Cysteine 729 contributes to the Zn(2+) binding site.

This sequence belongs to the vitamin-B12 independent methionine synthase family. Zn(2+) serves as cofactor.

The enzyme catalyses 5-methyltetrahydropteroyltri-L-glutamate + L-homocysteine = tetrahydropteroyltri-L-glutamate + L-methionine. It functions in the pathway amino-acid biosynthesis; L-methionine biosynthesis via de novo pathway; L-methionine from L-homocysteine (MetE route): step 1/1. Its function is as follows. Catalyzes the transfer of a methyl group from 5-methyltetrahydrofolate to homocysteine resulting in methionine formation. The sequence is that of 5-methyltetrahydropteroyltriglutamate--homocysteine methyltransferase from Serratia proteamaculans (strain 568).